Consider the following 273-residue polypeptide: N-alpha-acetyltransferase 30 (273 aa).

Disordered stretches follow at residues 1–39 and 62–85; these read MADA…HQLN and QKTR…PNGL. The N-acetyltransferase domain maps to 125 to 273; the sequence is RYVRYESELQ…DALRLKLWLR (149 aa).

The protein belongs to the acetyltransferase family. MAK3 subfamily. In terms of assembly, component of the N-terminal acetyltransferase C (NatC) complex.

The protein localises to the cytoplasm. Its subcellular location is the nucleus. It carries out the reaction N-terminal L-methionyl-L-leucyl-[protein] + acetyl-CoA = N-terminal N(alpha)-acetyl-L-methionyl-L-leucyl-[protein] + CoA + H(+). The catalysed reaction is N-terminal L-methionyl-L-isoleucyl-[protein] + acetyl-CoA = N-terminal N(alpha)-acetyl-L-methionyl-L-isoleucyl-[protein] + CoA + H(+). The enzyme catalyses N-terminal L-methionyl-L-phenylalanyl-[protein] + acetyl-CoA = N-terminal N(alpha)-acetyl-L-methionyl-L-phenylalanyl-[protein] + CoA + H(+). It catalyses the reaction N-terminal L-methionyl-L-tryptophyl-[protein] + acetyl-CoA = N-terminal N(alpha)-acetyl-L-methionyl-L-tryptophyl-[protein] + CoA + H(+). It carries out the reaction N-terminal L-methionyl-L-tyrosyl-[protein] + acetyl-CoA = N-terminal N(alpha)-acetyl-L-methionyl-L-tyrosyl-[protein] + CoA + H(+). Its function is as follows. Catalytic subunit of the N-terminal acetyltransferase C (NatC) complex. Catalyzes acetylation of the N-terminal methionine residues of peptides beginning with Met-Leu-Ala and Met-Leu-Gly. N-terminal acetylation protects proteins from ubiquitination and degradation by the N-end rule pathway. The protein is N-alpha-acetyltransferase 30 (naa30) of Xenopus laevis (African clawed frog).